The sequence spans 434 residues: Beta-enolase (434 aa).

At Ala2 the chain carries N-acetylalanine. Thr72 is modified (phosphothreonine). Residues Ser83 and Ser157 each carry the phosphoserine modification. Substrate is bound by residues His158 and Glu167. Ser176 carries the post-translational modification Phosphoserine. Residue Thr205 is modified to Phosphothreonine. Residue Glu210 is the Proton donor of the active site. Residue Thr229 is modified to Phosphothreonine. Residue Tyr236 is modified to Phosphotyrosine. Asp245 contacts Mg(2+). Residue Ser263 is modified to Phosphoserine. Residues Glu293 and Asp318 each coordinate substrate. Positions 293 and 318 each coordinate Mg(2+). Catalysis depends on Lys343, which acts as the Proton acceptor. Substrate contacts are provided by residues 370 to 373 (SHRS) and Lys394.

This sequence belongs to the enolase family. Mammalian enolase is composed of 3 isozyme subunits, alpha, beta and gamma, which can form homodimers or heterodimers which are cell-type and development-specific. Interacts with PNKD. It depends on Mg(2+) as a cofactor.

It localises to the cytoplasm. The catalysed reaction is (2R)-2-phosphoglycerate = phosphoenolpyruvate + H2O. It functions in the pathway carbohydrate degradation; glycolysis; pyruvate from D-glyceraldehyde 3-phosphate: step 4/5. Its function is as follows. Glycolytic enzyme that catalyzes the conversion of 2-phosphoglycerate to phosphoenolpyruvate. Appears to have a function in striated muscle development and regeneration. The sequence is that of Beta-enolase (ENO3) from Sus scrofa (Pig).